A 739-amino-acid polypeptide reads, in one-letter code: NAD(P)H-quinone oxidoreductase subunit 5, chloroplastic (739 aa).

16 consecutive transmembrane segments (helical) span residues 9-29 (WVIP…LILI), 39-59 (IWAF…VQLS), 89-109 (IDPL…LVLI), 125-145 (FVYI…SNLI), 147-167 (IYFF…FWFT), 185-205 (GDFG…SLEF), 219-239 (NGVN…GAVA), 258-278 (TPIS…FLLA), 280-300 (LLPL…VGTI), 327-347 (LGYM…FHLI), 354-374 (ALLF…VGYS), 396-416 (TTFL…CFWS), 425-445 (WLYS…TAFY), 542-562 (LFPL…GISF), 610-630 (TLAI…YSFF), and 719-739 (ISSY…FFLS).

This sequence belongs to the complex I subunit 5 family. NDH is composed of at least 16 different subunits, 5 of which are encoded in the nucleus.

The protein localises to the plastid. It localises to the chloroplast thylakoid membrane. It carries out the reaction a plastoquinone + NADH + (n+1) H(+)(in) = a plastoquinol + NAD(+) + n H(+)(out). It catalyses the reaction a plastoquinone + NADPH + (n+1) H(+)(in) = a plastoquinol + NADP(+) + n H(+)(out). NDH shuttles electrons from NAD(P)H:plastoquinone, via FMN and iron-sulfur (Fe-S) centers, to quinones in the photosynthetic chain and possibly in a chloroplast respiratory chain. The immediate electron acceptor for the enzyme in this species is believed to be plastoquinone. Couples the redox reaction to proton translocation, and thus conserves the redox energy in a proton gradient. The polypeptide is NAD(P)H-quinone oxidoreductase subunit 5, chloroplastic (ndhF) (Triticum aestivum (Wheat)).